The sequence spans 21 residues: Hemocyanin subunit 1 (21 aa).

It belongs to the tyrosinase family. Hemocyanin subfamily. As to expression, hemolymph.

The protein localises to the secreted. It localises to the extracellular space. In terms of biological role, hemocyanins are copper-containing oxygen carriers occurring freely dissolved in the hemolymph of many mollusks and arthropods. This Maja squinado (Mediterranean spider crab) protein is Hemocyanin subunit 1.